The sequence spans 335 residues: Nucleoid-associated protein YejK (335 aa).

This sequence belongs to the YejK family.

It localises to the cytoplasm. It is found in the nucleoid. The protein is Nucleoid-associated protein YejK of Shigella boydii serotype 18 (strain CDC 3083-94 / BS512).